The following is a 313-amino-acid chain: Methionyl-tRNA formyltransferase (313 aa).

S112 to P115 contributes to the (6S)-5,6,7,8-tetrahydrofolate binding site.

This sequence belongs to the Fmt family.

The catalysed reaction is L-methionyl-tRNA(fMet) + (6R)-10-formyltetrahydrofolate = N-formyl-L-methionyl-tRNA(fMet) + (6S)-5,6,7,8-tetrahydrofolate + H(+). In terms of biological role, attaches a formyl group to the free amino group of methionyl-tRNA(fMet). The formyl group appears to play a dual role in the initiator identity of N-formylmethionyl-tRNA by promoting its recognition by IF2 and preventing the misappropriation of this tRNA by the elongation apparatus. In Roseiflexus castenholzii (strain DSM 13941 / HLO8), this protein is Methionyl-tRNA formyltransferase.